Reading from the N-terminus, the 148-residue chain is uncharacterized protein (148 aa).

The interval 122-148 is disordered; that stretch reads HNWRKRMGTRRGRHEQSPTSRPRKGPD. Residues 123-134 are compositionally biased toward basic residues; that stretch reads NWRKRMGTRRGR.

This is an uncharacterized protein from Homo sapiens (Human).